The following is a 308-amino-acid chain: Phenylcoumaran benzylic ether reductase 1 (308 aa).

Residues 11–17 (GGTGYIG), Arg36, and Arg45 each bind NADP(+). The active-site Proton acceptor is the Lys133. Position 137 (Arg137) interacts with NADP(+).

Belongs to the NmrA-type oxidoreductase family. Isoflavone reductase subfamily. As to expression, expressed in apical meristem and cotyledon veins of young seedlings. Expressed in vascular tissues of roots, leaves, stems and petals. Expressed in pollen grains. Expressed at low levels in cauline leaves and siliques.

The catalysed reaction is (-)-dehydrodiconiferyl alcohol + NADPH + H(+) = (S)-isodihydrodehydrodiconiferyl alcohol + NADP(+). It catalyses the reaction (+)-dehydrodiconiferyl alcohol + NADPH + H(+) = (R)-isodihydrodehydrodiconiferyl alcohol + NADP(+). The enzyme catalyses (2R,3S)-dihydrodehydrodiconiferyl alcohol + NADPH + H(+) = (S)-tetrahydrodehydrodiconiferyl alcohol + NADP(+). It carries out the reaction (2S,3R)-dihydrodehydrodiconiferyl alcohol + NADPH + H(+) = (R)-tetrahydrodehydrodiconiferyl alcohol + NADP(+). Oxidoreductase involved in lignan biosynthesis. Catalyzes the NADPH-dependent reduction of phenylcoumaran benzylic ethers. Converts dehydrodiconiferyl alcohol (DDC) to isodihydrodehydrodiconiferyl alcohol (IDDDC), and dihydrodehydrodiconiferyl alcohol (DDDC) to tetrahydrodehydrodiconiferyl alcohol (TDDC). Plays an important role in the biosynthesis of secondary metabolites. In addition to the 8-5'-linked neolignan DDC, can reduce the 8-8'-linked lignans, pinoresinol, and lariciresinol, but with lower activities. The polypeptide is Phenylcoumaran benzylic ether reductase 1 (Arabidopsis thaliana (Mouse-ear cress)).